A 247-amino-acid chain; its full sequence is 2-amino-5-formylamino-6-ribosylaminopyrimidin-4(3H)-one 5'-monophosphate deformylase (247 aa).

Fe cation contacts are provided by glutamate 41, histidine 43, aspartate 52, and histidine 121.

It belongs to the creatininase superfamily. FAPy deformylase family. Homodimer. Fe(2+) serves as cofactor. The cofactor is Zn(2+).

The enzyme catalyses 2-amino-5-formylamino-6-(5-phospho-D-ribosylamino)pyrimidin-4(3H)-one + H2O = 2,5-diamino-6-(1-D-ribosylamino)pyrimidin-4(3H)-one 5'-phosphate + formate + H(+). The protein operates within cofactor biosynthesis; coenzyme F420 biosynthesis. Its pathway is cofactor biosynthesis; riboflavin biosynthesis. Its function is as follows. Catalyzes the hydrolysis of the formamide of 2-amino-5-formylamino-6-ribosylamino-4(3H)-pyrimidinone 5'-monophosphate (FAPy) to form 2,5-diamino-6-ribosylamino-4(3H)-pyrimidinone 5'-phosphate (APy). The polypeptide is 2-amino-5-formylamino-6-ribosylaminopyrimidin-4(3H)-one 5'-monophosphate deformylase (Methanothermus fervidus (strain ATCC 43054 / DSM 2088 / JCM 10308 / V24 S)).